A 2488-amino-acid chain; its full sequence is PKS-NRPS hybrid synthetase swnK (2488 aa).

The segment at 33–422 is adenylation (A) domain; it reads FEQVADRFPD…GRIDGVVKIR (390 aa). A Carrier 1 domain is found at 523-598; the sequence is QPTSELEQRI…ALAAYLAGTG (76 aa). O-(pantetheine 4'-phosphoryl)serine is present on Ser558. One can recognise a Ketosynthase family 3 (KS3) domain in the interval 616–1039; it reads HEDIAIVSMA…GTNAHVIVEE (424 aa). Catalysis depends on for beta-ketoacyl synthase activity residues Cys785, His920, and His960. Positions 1149-1471 are malonyl-CoA:ACP transacylase (MAT) domain; it reads LFTGQGSQLP…SLSELHVRHV (323 aa). The ketoreductase (KR) domain stretch occupies residues 1723 to 1901; that stretch reads GAVLVTGGLG…ASSVAYGTWA (179 aa). In terms of domain architecture, Carrier 2 spans 2002-2077; sequence SIVLHMVQAT…SLSEFLLCRL (76 aa). Ser2037 bears the O-(pantetheine 4'-phosphoryl)serine mark. Positions 2084 to 2103 are disordered; the sequence is STSSPSDTDGATPSTPTSAA. Residues 2136–2364 form a thioester reductase (TE) domain region; that stretch reads VTGATGFVGT…VLPVDYLCGT (229 aa).

This sequence in the N-terminal section; belongs to the NRP synthetase family.

The catalysed reaction is L-pipecolate + malonyl-CoA + 2 NADPH + 4 H(+) = (8aS)-octahydroindolizin-1-one + CO2 + 2 NADP(+) + CoA + 2 H2O. The enzyme catalyses L-pipecolate + malonyl-CoA + 3 NADPH + 5 H(+) = (1R,8aS)-octahydroindolizin-1-ol + CO2 + 3 NADP(+) + CoA + 2 H2O. It catalyses the reaction L-pipecolate + malonyl-CoA + 3 NADPH + 5 H(+) = (1S,8aS)-octahydroindolizin-1-ol + CO2 + 3 NADP(+) + CoA + 2 H2O. It functions in the pathway mycotoxin biosynthesis. In terms of biological role, PKS-NRPS hybrid synthetase; part of the gene cluster that mediates the biosynthesis of swainsonine (SW), a cytotoxic fungal alkaloid and a potential cancer therapy drug. Swainsonine production occurs via a multibranched pathway and is dispensable for fungal colonization of plants and infection of insect hosts. The first step of swainsonine biosynthesis is the production of the precursor pipecolic acid (PA) via conversion of L-lysine (Lys) to 1-piperideine-6-carboxylate (P6C) by the aminotransferase swnA, the latter being further reduced to PA by the reductase swnR. PA can be converted from lysine by both the SW biosynthetic cluster and the unclustered genes such as lysine cyclodeaminase. The PKS-NRPS hybrid synthetase swnK uptakes and condensates PA and malonyl-CoA with and without skipping of the ketoreductase (KR) domain in order to produce 3 intermediates, 1-oxoindolizidine, (1S)-1-hydroxyindolizin, and (1R)-1-hydroxyindolizine; with the transisomer (1S)-1-hydroxyindolizin being predominant. The terminal thioester reductase (TE) domain of swnK is involved in reduction of the thioester bond to release the intermediate aldehydes. The oxidoreductase swnN could contribute to the reduction of 1-oxoindolizidine to (1S)-1-hydroxyindolizin and (1R)-1-hydroxyindolizine, contributing to the major route of SW production. The dioxygenase swnH2 would be responsible for the oxidization of (1R)-1-hydroxyindolizine into (1R,2S)-1,2-dihydroxyindolizine and of (1S)-1-hydroxyindolizin to yield both (1R,2S)-1,2-dihydroxyindolizine and (1S,2S)-1,2-dihydroxyindolizine. The dioxygenase swnH1 then performs the conversion of the 1,2-dihydroxyindolizine epimers to SW. The sequence is that of PKS-NRPS hybrid synthetase swnK from Metarhizium robertsii (strain ARSEF 23 / ATCC MYA-3075) (Metarhizium anisopliae (strain ARSEF 23)).